Consider the following 90-residue polypeptide: Small ribosomal subunit protein uS15c (90 aa).

The protein belongs to the universal ribosomal protein uS15 family. Part of the 30S ribosomal subunit.

It localises to the plastid. The protein localises to the chloroplast. The protein is Small ribosomal subunit protein uS15c (rps15) of Buxus microphylla (Littleleaf boxwood).